A 243-amino-acid polypeptide reads, in one-letter code: Probable heat shock transcription factor (243 aa).

A DNA-binding region spans residues 9-102 (INKFIRRLYK…GDNLLPCIQR (94 aa)). The segment at 121 to 164 (QLQDLLQYLNNQNFKLEGEIKSLKDRVDQQDCTINGLVQLLTRI) is involved in trimerization.

The protein belongs to the HSF family. As to quaternary structure, homotrimer. Homotrimerization increases the affinity of HSF1 to DNA.

It is found in the nucleus. In terms of biological role, DNA-binding transcription factor that specifically binds heat shock promoter elements (HSE) and activates transcription. In Vairimorpha ceranae (strain BRL01) (Microsporidian parasite), this protein is Probable heat shock transcription factor.